A 311-amino-acid chain; its full sequence is Putative ribose-phosphate pyrophosphokinase 2 (311 aa).

ATP is bound by residues 38-40 and 97-98; these read DGE and RQ. Mg(2+)-binding residues include His131 and Asp171. Position 219 (Asp219) interacts with D-ribose 5-phosphate.

It belongs to the ribose-phosphate pyrophosphokinase family. Class I subfamily. Homohexamer. Requires Mg(2+) as cofactor.

The protein resides in the cytoplasm. The enzyme catalyses D-ribose 5-phosphate + ATP = 5-phospho-alpha-D-ribose 1-diphosphate + AMP + H(+). The protein operates within metabolic intermediate biosynthesis; 5-phospho-alpha-D-ribose 1-diphosphate biosynthesis; 5-phospho-alpha-D-ribose 1-diphosphate from D-ribose 5-phosphate (route I): step 1/1. In terms of biological role, involved in the biosynthesis of the central metabolite phospho-alpha-D-ribosyl-1-pyrophosphate (PRPP) via the transfer of pyrophosphoryl group from ATP to 1-hydroxyl of ribose-5-phosphate (Rib-5-P). The chain is Putative ribose-phosphate pyrophosphokinase 2 from Listeria innocua serovar 6a (strain ATCC BAA-680 / CLIP 11262).